Reading from the N-terminus, the 64-residue chain is Small ribosomal subunit protein bS21 (64 aa).

The segment at 40-64 is disordered; the sequence is PPSVKRKIKSQEAQRRMRRTKRKRF. A compositionally biased stretch (basic residues) spans 55-64; the sequence is RMRRTKRKRF.

Belongs to the bacterial ribosomal protein bS21 family.

The polypeptide is Small ribosomal subunit protein bS21 (Elusimicrobium minutum (strain Pei191)).